The chain runs to 320 residues: Ferrochelatase (320 aa).

Residues His194 and Glu275 each contribute to the Fe cation site.

The protein belongs to the ferrochelatase family. Monomer.

It is found in the cytoplasm. The enzyme catalyses heme b + 2 H(+) = protoporphyrin IX + Fe(2+). Its pathway is porphyrin-containing compound metabolism; protoheme biosynthesis; protoheme from protoporphyrin-IX: step 1/1. Its function is as follows. Catalyzes the ferrous insertion into protoporphyrin IX. The sequence is that of Ferrochelatase from Salmonella paratyphi A (strain ATCC 9150 / SARB42).